A 250-amino-acid polypeptide reads, in one-letter code: Bcl-2-like protein 12 (250 aa).

The segment at 24–46 is disordered; that stretch reads GEAAGSPVPTPPRSPAQEEPTDF. The residue at position 29 (Ser29) is a Phosphoserine. Thr33 is subject to Phosphothreonine. A Phosphoserine modification is found at Ser37. Position 60 is an omega-N-methylarginine (Arg60). A phosphoserine mark is found at Ser111, Ser158, Ser159, Ser161, and Ser189. The BH2 signature appears at 227 to 238; it reads WIQAHGGWEGIL.

It belongs to the Bcl-2 family. In terms of tissue distribution, expressed mainly in breast, thymus, prostate, fetal liver, colon, placenta, pancreas, small intestine, spinal cord, kidney, and bone marrow and to a lesser extent in many other tissues. Isoform 2 is primarily expressed in skeletal muscle.

This is Bcl-2-like protein 12 from Homo sapiens (Human).